Here is a 182-residue protein sequence, read N- to C-terminus: ATP-dependent protease subunit HslV (182 aa).

Thr2 is a catalytic residue. Na(+) is bound by residues Gly157, Cys160, and Thr163.

Belongs to the peptidase T1B family. HslV subfamily. As to quaternary structure, a double ring-shaped homohexamer of HslV is capped on each side by a ring-shaped HslU homohexamer. The assembly of the HslU/HslV complex is dependent on binding of ATP.

It is found in the cytoplasm. It catalyses the reaction ATP-dependent cleavage of peptide bonds with broad specificity.. Its activity is regulated as follows. Allosterically activated by HslU binding. Protease subunit of a proteasome-like degradation complex believed to be a general protein degrading machinery. In Sodalis glossinidius (strain morsitans), this protein is ATP-dependent protease subunit HslV.